The following is a 163-amino-acid chain: MPSFDIVSEVDLQEARNAVDNASREVESRFDFRNVEASFELNDASKTIKVLSESDFQVNQLLDILRAKLLKRGIEGSSLDVPENIVHSGKTWFVEAKLKQGIESATQKKIVKMIKDSKLKVQAQIQGDEIRVTGKSRDDLQAVMAMVRGSDLGQPFQFKNFRD.

The protein belongs to the YajQ family.

Functionally, nucleotide-binding protein. This is Nucleotide-binding protein YajQ from Escherichia coli O81 (strain ED1a).